A 253-amino-acid polypeptide reads, in one-letter code: Glucosamine-6-phosphate deaminase (253 aa).

Asp-65 serves as the catalytic Proton acceptor; for enolization step. Asn-133 (for ring-opening step) is an active-site residue. His-135 (proton acceptor; for ring-opening step) is an active-site residue. The For ring-opening step role is filled by Glu-140.

Belongs to the glucosamine/galactosamine-6-phosphate isomerase family. NagB subfamily.

The catalysed reaction is alpha-D-glucosamine 6-phosphate + H2O = beta-D-fructose 6-phosphate + NH4(+). It functions in the pathway amino-sugar metabolism; N-acetylneuraminate degradation; D-fructose 6-phosphate from N-acetylneuraminate: step 5/5. Catalyzes the reversible isomerization-deamination of glucosamine 6-phosphate (GlcN6P) to form fructose 6-phosphate (Fru6P) and ammonium ion. The chain is Glucosamine-6-phosphate deaminase from Corynebacterium efficiens (strain DSM 44549 / YS-314 / AJ 12310 / JCM 11189 / NBRC 100395).